Reading from the N-terminus, the 61-residue chain is Metallothionein-1A (61 aa).

Methionine 1 bears the N-acetylmethionine mark. The beta stretch occupies residues 1 to 29; it reads MDPNCSCPTGGSCSCAGSCTCKACRCPSC. Positions 5, 7, 13, 15, 19, 21, 24, 26, 29, 33, 34, 36, 37, 41, 44, 48, 50, and 57 each coordinate a divalent metal cation. Positions 30–61 are alpha; it reads KKSCCSCCPVGCAKCAQGCVCKGASDKCSCCA. At serine 58 the chain carries Phosphoserine. The a divalent metal cation site is built by cysteine 59 and cysteine 60.

It belongs to the metallothionein superfamily. Type 1 family. As to quaternary structure, monomer.

Functionally, metallothioneins have a high content of cysteine residues that bind various heavy metals; these proteins are transcriptionally regulated by both heavy metals and glucocorticoids. This is Metallothionein-1A (MT1A) from Bos taurus (Bovine).